We begin with the raw amino-acid sequence, 184 residues long: Photosystem I assembly protein Ycf4 (184 aa).

Transmembrane regions (helical) follow at residues 22–42 (LCWA…GTSS) and 57–77 (ILFF…LFIS).

Belongs to the Ycf4 family.

The protein localises to the plastid. Its subcellular location is the chloroplast thylakoid membrane. In terms of biological role, seems to be required for the assembly of the photosystem I complex. This Daucus carota (Wild carrot) protein is Photosystem I assembly protein Ycf4.